Consider the following 54-residue polypeptide: Ovomucoid (54 aa).

The Kazal-like domain occupies valine 4–cysteine 54. 3 cysteine pairs are disulfide-bonded: cysteine 6–cysteine 36, cysteine 14–cysteine 33, and cysteine 22–cysteine 54. The N-linked (GlcNAc...) asparagine glycan is linked to asparagine 43.

It is found in the secreted. The polypeptide is Ovomucoid (Argusianus argus (Great argus)).